The sequence spans 332 residues: Transaldolase (332 aa).

The active-site Schiff-base intermediate with substrate is Lys136.

The protein belongs to the transaldolase family. Type 1 subfamily.

The protein resides in the cytoplasm. The catalysed reaction is D-sedoheptulose 7-phosphate + D-glyceraldehyde 3-phosphate = D-erythrose 4-phosphate + beta-D-fructose 6-phosphate. Its pathway is carbohydrate degradation; pentose phosphate pathway; D-glyceraldehyde 3-phosphate and beta-D-fructose 6-phosphate from D-ribose 5-phosphate and D-xylulose 5-phosphate (non-oxidative stage): step 2/3. Transaldolase is important for the balance of metabolites in the pentose-phosphate pathway. The polypeptide is Transaldolase (Trichormus variabilis (strain ATCC 29413 / PCC 7937) (Anabaena variabilis)).